The primary structure comprises 139 residues: Large ribosomal subunit protein uL16 (139 aa).

Basic residues predominate over residues 1-17 (MLMPKRVKYRKTQRGRM). Residues 1–24 (MLMPKRVKYRKTQRGRMKGNSGRG) are disordered.

This sequence belongs to the universal ribosomal protein uL16 family. As to quaternary structure, part of the 50S ribosomal subunit.

Binds 23S rRNA and is also seen to make contacts with the A and possibly P site tRNAs. The chain is Large ribosomal subunit protein uL16 from Pelodictyon phaeoclathratiforme (strain DSM 5477 / BU-1).